The sequence spans 377 residues: tRNA-specific 2-thiouridylase MnmA (377 aa).

Residues 12–19 (GMSGGVDS) and M38 contribute to the ATP site. The interaction with target base in tRNA stretch occupies residues 98-100 (NPD). The active-site Nucleophile is C103. The cysteines at positions 103 and 200 are disulfide-linked. Residue G127 coordinates ATP. Positions 150–152 (KDQ) are interaction with tRNA. The active-site Cysteine persulfide intermediate is the C200. The tract at residues 314–315 (RY) is interaction with tRNA.

The protein belongs to the MnmA/TRMU family.

It is found in the cytoplasm. It carries out the reaction S-sulfanyl-L-cysteinyl-[protein] + uridine(34) in tRNA + AH2 + ATP = 2-thiouridine(34) in tRNA + L-cysteinyl-[protein] + A + AMP + diphosphate + H(+). Its function is as follows. Catalyzes the 2-thiolation of uridine at the wobble position (U34) of tRNA, leading to the formation of s(2)U34. This chain is tRNA-specific 2-thiouridylase MnmA, found in Limosilactobacillus fermentum (strain NBRC 3956 / LMG 18251) (Lactobacillus fermentum).